The chain runs to 213 residues: Cytokinin riboside 5'-monophosphate phosphoribohydrolase LOG2 (213 aa).

Residues glutamate 79, 97–98 (RK), 114–120 (GYGTFEE), and threonine 126 each bind substrate.

This sequence belongs to the LOG family. Expressed in roots and shoots. Detected in root hairs.

The protein resides in the cytoplasm. Its subcellular location is the nucleus. The enzyme catalyses N(6)-(dimethylallyl)adenosine 5'-phosphate + H2O = N(6)-dimethylallyladenine + D-ribose 5-phosphate. It carries out the reaction 9-ribosyl-trans-zeatin 5'-phosphate + H2O = trans-zeatin + D-ribose 5-phosphate. In terms of biological role, cytokinin-activating enzyme working in the direct activation pathway. Phosphoribohydrolase that converts inactive cytokinin nucleotides to the biologically active free-base forms. The sequence is that of Cytokinin riboside 5'-monophosphate phosphoribohydrolase LOG2 (LOG2) from Arabidopsis thaliana (Mouse-ear cress).